Consider the following 86-residue polypeptide: CLAVATA3/ESR (CLE)-related protein 8 (86 aa).

The first 24 residues, 1 to 24 (MKVLKRDSMLLLITLYFLLTTSMA), serve as a signal peptide directing secretion. A disordered region spans residues 43 to 86 (DLKQNKAKPHLPNLFRTMRRVPTGPNPLHHISPPQPGSLNYARN). Hydroxyproline occurs at positions 64 and 67. A glycan (O-linked (Ara...) hydroxyproline) is linked at Pro-67.

This sequence belongs to the CLV3/ESR signal peptide family. The O-glycosylation (arabinosylation) of the hydroxyproline Pro-67 enhances binding affinity of the CLE8p peptide for its receptor. In terms of tissue distribution, mostly expressed in siliques, and, to a lower extent, in flowers. Expressed in young embryos and endosperm.

Its subcellular location is the secreted. The protein resides in the extracellular space. Its function is as follows. Extracellular signal peptide that regulates cell fate. Represses root apical meristem maintenance. Positively regulates the expression of the transcription factor WOX8 and thus, regulates early embryo development. Regulates the transition of protophloem cells from proliferation to differentiation, thus impinging on postembryonic growth capacity of the root meristem; this signaling pathway requires CRN and CLV2. The polypeptide is CLAVATA3/ESR (CLE)-related protein 8 (Arabidopsis thaliana (Mouse-ear cress)).